We begin with the raw amino-acid sequence, 163 residues long: Centrosomal protein of 19 kDa (163 aa).

Belongs to the CEP19 family. Interacts with CEP43; this interaction is required for its localization to the mother centriole. Interacts (via residues 121-150) with RABL2B. Interacts (via C-terminus) with CEP350; this interaction is required for its localization to the mother centriole.

Its subcellular location is the cytoplasm. It localises to the cytoskeleton. The protein localises to the microtubule organizing center. The protein resides in the centrosome. It is found in the centriole. Its subcellular location is the spindle pole. It localises to the cilium basal body. Functionally, required for ciliation. Recruits the RABL2B GTPase to the ciliary base to initiate ciliation. After specifically capturing the activated GTP-bound RABL2B, the CEP19-RABL2B complex binds intraflagellar transport (IFT) complex B from the large pool pre-docked at the base of the cilium and thus triggers its entry into the cilia. Involved in the early steps in cilia formation by recruiting the ciliary vesicles (CVs) to the distal end of the mother centriole where they fuse to initiate cilium assembly. Involved in microtubule (MT) anchoring to the centrosomes. The protein is Centrosomal protein of 19 kDa (CEP19) of Homo sapiens (Human).